Here is a 216-residue protein sequence, read N- to C-terminus: Probable nicotinate-nucleotide adenylyltransferase (216 aa).

It belongs to the NadD family.

It carries out the reaction nicotinate beta-D-ribonucleotide + ATP + H(+) = deamido-NAD(+) + diphosphate. It functions in the pathway cofactor biosynthesis; NAD(+) biosynthesis; deamido-NAD(+) from nicotinate D-ribonucleotide: step 1/1. In terms of biological role, catalyzes the reversible adenylation of nicotinate mononucleotide (NaMN) to nicotinic acid adenine dinucleotide (NaAD). This chain is Probable nicotinate-nucleotide adenylyltransferase, found in Marinobacter nauticus (strain ATCC 700491 / DSM 11845 / VT8) (Marinobacter aquaeolei).